Reading from the N-terminus, the 208-residue chain is MSIVTKALNLVPMVVEQTSRGERAYDIYSRLLKERLIFLVGPIDDHMANVIVAQLLFLEADNPEKDISIYINSPGGVVTAGMAIYDTMQYIKPDVSTICVGQAASMGALLLASGAAGKRYALPNSRVMIHQPLGGFQGQATDIDIHAREILTLRSRLNEILAKHTGQSLETIARDTERDNFKSAVDAQAYGLVDHVLERRPEESIQPS.

Residue Ser105 is the Nucleophile of the active site. His130 is an active-site residue.

The protein belongs to the peptidase S14 family. As to quaternary structure, fourteen ClpP subunits assemble into 2 heptameric rings which stack back to back to give a disk-like structure with a central cavity, resembling the structure of eukaryotic proteasomes.

It is found in the cytoplasm. It catalyses the reaction Hydrolysis of proteins to small peptides in the presence of ATP and magnesium. alpha-casein is the usual test substrate. In the absence of ATP, only oligopeptides shorter than five residues are hydrolyzed (such as succinyl-Leu-Tyr-|-NHMec, and Leu-Tyr-Leu-|-Tyr-Trp, in which cleavage of the -Tyr-|-Leu- and -Tyr-|-Trp bonds also occurs).. Its function is as follows. Cleaves peptides in various proteins in a process that requires ATP hydrolysis. Has a chymotrypsin-like activity. Plays a major role in the degradation of misfolded proteins. The chain is ATP-dependent Clp protease proteolytic subunit from Xanthomonas campestris pv. campestris (strain 8004).